The following is an 876-amino-acid chain: Translation initiation factor IF-2 (876 aa).

The tract at residues 164–288 (VEIKEPEEPA…EEPAPHAFSA (125 aa)) is disordered. The segment covering 179 to 219 (AAPVAGPEAVPVAPETPSAAPGETVAAVEAEAAPSQPASTE) has biased composition (low complexity). The span at 244–259 (VWKEEKVEKRGLKTRG) shows a compositional bias: basic and acidic residues. Residues 378-547 (ARAPVVTVMG…LLQAEVLELK (170 aa)) form the tr-type G domain. Residues 387–394 (GHVDHGKT) are G1. 387–394 (GHVDHGKT) contributes to the GTP binding site. The tract at residues 412-416 (GITQH) is G2. Residues 433–436 (DTPG) are G3. Residues 433–437 (DTPGH) and 487–490 (TKID) contribute to the GTP site. The G4 stretch occupies residues 487–490 (TKID). A G5 region spans residues 523 to 525 (SAK).

It belongs to the TRAFAC class translation factor GTPase superfamily. Classic translation factor GTPase family. IF-2 subfamily.

It is found in the cytoplasm. Its function is as follows. One of the essential components for the initiation of protein synthesis. Protects formylmethionyl-tRNA from spontaneous hydrolysis and promotes its binding to the 30S ribosomal subunits. Also involved in the hydrolysis of GTP during the formation of the 70S ribosomal complex. The chain is Translation initiation factor IF-2 from Nitrosospira multiformis (strain ATCC 25196 / NCIMB 11849 / C 71).